The following is an 89-amino-acid chain: Small ribosomal subunit protein bS20 (89 aa).

Over residues 1–11 (MANIKSQIKRN) the composition is skewed to polar residues. Residues 1–22 (MANIKSQIKRNLTNEKRRLRNK) form a disordered region.

This sequence belongs to the bacterial ribosomal protein bS20 family.

Its function is as follows. Binds directly to 16S ribosomal RNA. The polypeptide is Small ribosomal subunit protein bS20 (Frankia casuarinae (strain DSM 45818 / CECT 9043 / HFP020203 / CcI3)).